Here is a 729-residue protein sequence, read N- to C-terminus: Fatty acid oxidation complex subunit alpha (729 aa).

The enoyl-CoA hydratase/isomerase stretch occupies residues 1-189 (MLYKGDTLYL…KIGLVDGVVK (189 aa)). Asp296 provides a ligand contact to substrate. The interval 311-729 (ETPKQAAVLG…ARAVGDLKTA (419 aa)) is 3-hydroxyacyl-CoA dehydrogenase. Residues Met324, Asp343, 400-402 (VVE), Lys407, and Ser429 each bind NAD(+). The active-site For 3-hydroxyacyl-CoA dehydrogenase activity is the His450. Asn453 lines the NAD(+) pocket. 2 residues coordinate substrate: Asn500 and Tyr660.

In the N-terminal section; belongs to the enoyl-CoA hydratase/isomerase family. This sequence in the C-terminal section; belongs to the 3-hydroxyacyl-CoA dehydrogenase family. As to quaternary structure, heterotetramer of two alpha chains (FadB) and two beta chains (FadA).

The catalysed reaction is a (3S)-3-hydroxyacyl-CoA + NAD(+) = a 3-oxoacyl-CoA + NADH + H(+). It catalyses the reaction a (3S)-3-hydroxyacyl-CoA = a (2E)-enoyl-CoA + H2O. It carries out the reaction a 4-saturated-(3S)-3-hydroxyacyl-CoA = a (3E)-enoyl-CoA + H2O. The enzyme catalyses (3S)-3-hydroxybutanoyl-CoA = (3R)-3-hydroxybutanoyl-CoA. The catalysed reaction is a (3Z)-enoyl-CoA = a 4-saturated (2E)-enoyl-CoA. It catalyses the reaction a (3E)-enoyl-CoA = a 4-saturated (2E)-enoyl-CoA. It functions in the pathway lipid metabolism; fatty acid beta-oxidation. Involved in the aerobic and anaerobic degradation of long-chain fatty acids via beta-oxidation cycle. Catalyzes the formation of 3-oxoacyl-CoA from enoyl-CoA via L-3-hydroxyacyl-CoA. It can also use D-3-hydroxyacyl-CoA and cis-3-enoyl-CoA as substrate. The chain is Fatty acid oxidation complex subunit alpha from Escherichia fergusonii (strain ATCC 35469 / DSM 13698 / CCUG 18766 / IAM 14443 / JCM 21226 / LMG 7866 / NBRC 102419 / NCTC 12128 / CDC 0568-73).